Reading from the N-terminus, the 622-residue chain is Lamin Dm0 (622 aa).

Residues 1–50 form a disordered region; that stretch reads MSSKSRRAGTATPQPGNTSTPRPPSAGPQPPPPSTHSQTASSPLSPTRHS. The residue at position 2 (Ser-2) is an N-acetylserine. Positions 2 to 56 are head; that stretch reads SSKSRRAGTATPQPGNTSTPRPPSAGPQPPPPSTHSQTASSPLSPTRHSRVAEKV. Phosphothreonine occurs at positions 10, 12, and 20. Positions 21-34 are enriched in pro residues; sequence PRPPSAGPQPPPPS. Phosphoserine is present on residues Ser-25 and Ser-34. Thr-39 is modified (phosphothreonine). 3 positions are modified to phosphoserine: Ser-41, Ser-42, and Ser-45. The residue at position 47 (Thr-47) is a Phosphothreonine. An IF rod domain is found at 54–410; sequence EKVELQNLND…KLLVGEEARL (357 aa). The interval 55 to 91 is coil 1A; the sequence is KVELQNLNDRLATYIDRVRNLETENSRLTIEVQTTRD. The segment at 92 to 103 is linker 1; it reads TVTRETTNIKNI. The tract at residues 104-241 is coil 1B; sequence FEAELLETRR…QIHSQEINES (138 aa). Ser-235 carries the phosphoserine modification. The segment at 242 to 265 is linker 2; sequence RRIKQTEYSEIDGRLSSEYDAKLK. Residue Tyr-249 is modified to Phosphotyrosine. Phosphoserine occurs at positions 250 and 311. Positions 266 to 408 are coil 2; it reads QSLQELRAQY…YDKLLVGEEA (143 aa). The tract at residues 409 to 619 is tail; that stretch reads RLNITPATNT…GDPQQSNEKC (211 aa). A phosphothreonine mark is found at Thr-413 and Thr-435. Over residues 429-440 the composition is skewed to polar residues; it reads RNSTRATPSRRT. Residues 429–448 are disordered; that stretch reads RNSTRATPSRRTPSAAVKRK. Ser-442 bears the Phosphoserine mark. The Nuclear localization signal motif lies at 446–451; the sequence is KRKRAV. Ser-455 and Ser-459 each carry phosphoserine. Positions 461 to 588 constitute an LTD domain; that stretch reads ADYYVSASAK…RIVSQHTSSS (128 aa). Phosphoserine is present on Ser-595. Thr-597 carries the phosphothreonine modification. The interval 603 to 622 is disordered; sequence EQLYHQQGDPQQSNEKCAIM. The span at 605-622 shows a compositional bias: polar residues; sequence LYHQQGDPQQSNEKCAIM. The residue at position 615 (Ser-615) is a Phosphoserine. Residue Cys-619 is modified to Cysteine methyl ester. Cys-619 carries the S-farnesyl cysteine lipid modification. A propeptide spans 620-622 (removed in mature form); it reads AIM.

The protein belongs to the intermediate filament family. In terms of assembly, interacts directly with LBR. Interacts with MAN1. Interacts with Ote. Three forms of lamin have been identified in D.melanogaster, lamin Dm0 is rapidly processed to lamin Dm1 in the cytoplasm, Dm1 is then assembled in the nuclear envelope and is then phosphorylated, forming lamin Dm2. In terms of tissue distribution, constitutively expressed in all tissues (at protein level). Expressed in spermatocytes (at protein level).

The protein localises to the nucleus. The protein resides in the nucleus inner membrane. It localises to the nucleus envelope. It is found in the nucleus lamina. Its subcellular location is the cytoplasm. The protein localises to the cytoskeleton. The protein resides in the spindle pole. Its function is as follows. Lamins are components of the nuclear lamina, a fibrous layer on the nucleoplasmic side of the inner nuclear membrane, which is thought to provide a framework for the nuclear envelope and may also interact with chromatin. May have a role in the localization of the LEM domain proteins Ote, bocks and MAN1 to the nuclear membrane. In spermatocytes, plays a role in maintaining type-A lamin LamC nuclear localization; regulates meiotic cytokinesis by maintaining the structure of the spindle envelope, and by contributing to the formation of the contractile ring and central spindle. Required for nuclear migration and to link the microtubule organizing center (MTOC) to the nucleus. In addition, is required for nuclear envelope localization of klar. This chain is Lamin Dm0, found in Drosophila melanogaster (Fruit fly).